Reading from the N-terminus, the 288-residue chain is DegV domain-containing protein MYPU_3590 (288 aa).

Positions 3–275 (IAIVIDSSSG…LGAIAISLVK (273 aa)) constitute a DegV domain. Positions 61 and 92 each coordinate hexadecanoate.

Its function is as follows. May bind long-chain fatty acids, such as palmitate, and may play a role in lipid transport or fatty acid metabolism. The chain is DegV domain-containing protein MYPU_3590 from Mycoplasmopsis pulmonis (strain UAB CTIP) (Mycoplasma pulmonis).